We begin with the raw amino-acid sequence, 393 residues long: Elongation factor Tu (393 aa).

The 193-residue stretch at 10 to 202 folds into the tr-type G domain; sequence KPHVNIGTIG…AVDEYIPTPE (193 aa). The tract at residues 19–26 is G1; sequence GHVDHGKT. GTP is bound at residue 19–26; the sequence is GHVDHGKT. Residue threonine 26 coordinates Mg(2+). The G2 stretch occupies residues 60-64; the sequence is GITIN. The segment at 81–84 is G3; it reads DCPG. Residues 81 to 85 and 136 to 139 contribute to the GTP site; these read DCPGH and NKAD. The tract at residues 136–139 is G4; that stretch reads NKAD. The G5 stretch occupies residues 174–176; sequence SAL.

It belongs to the TRAFAC class translation factor GTPase superfamily. Classic translation factor GTPase family. EF-Tu/EF-1A subfamily. In terms of assembly, monomer.

The protein localises to the cytoplasm. It carries out the reaction GTP + H2O = GDP + phosphate + H(+). In terms of biological role, GTP hydrolase that promotes the GTP-dependent binding of aminoacyl-tRNA to the A-site of ribosomes during protein biosynthesis. In Clostridium novyi (strain NT), this protein is Elongation factor Tu.